A 386-amino-acid polypeptide reads, in one-letter code: Alanine racemase (386 aa).

Lysine 38 (proton acceptor; specific for D-alanine) is an active-site residue. Lysine 38 is modified (N6-(pyridoxal phosphate)lysine). Position 136 (arginine 136) interacts with substrate. The active-site Proton acceptor; specific for L-alanine is tyrosine 267. Methionine 315 contacts substrate.

Belongs to the alanine racemase family. The cofactor is pyridoxal 5'-phosphate.

The enzyme catalyses L-alanine = D-alanine. Its pathway is amino-acid biosynthesis; D-alanine biosynthesis; D-alanine from L-alanine: step 1/1. Its function is as follows. Catalyzes the interconversion of L-alanine and D-alanine. May also act on other amino acids. The protein is Alanine racemase (alr) of Clostridium perfringens (strain ATCC 13124 / DSM 756 / JCM 1290 / NCIMB 6125 / NCTC 8237 / Type A).